Consider the following 156-residue polypeptide: NADH-ubiquinone oxidoreductase 20 kDa subunit (156 aa).

4 residues coordinate [4Fe-4S] cluster: Cys-33, Cys-34, Cys-98, and Cys-128.

This sequence belongs to the complex I 20 kDa subunit family. The cofactor is [4Fe-4S] cluster.

The protein resides in the mitochondrion. The enzyme catalyses a ubiquinone + NADH + 5 H(+)(in) = a ubiquinol + NAD(+) + 4 H(+)(out). The protein is NADH-ubiquinone oxidoreductase 20 kDa subunit (NAD10) of Paramecium tetraurelia.